We begin with the raw amino-acid sequence, 83 residues long: Small ribosomal subunit protein bS20 (83 aa).

The tract at residues 1–25 is disordered; sequence MPNIKSAIKRVNTTHTAEERNISQK. The span at 16 to 25 shows a compositional bias: basic and acidic residues; that stretch reads TAEERNISQK.

The protein belongs to the bacterial ribosomal protein bS20 family.

In terms of biological role, binds directly to 16S ribosomal RNA. In Staphylococcus saprophyticus subsp. saprophyticus (strain ATCC 15305 / DSM 20229 / NCIMB 8711 / NCTC 7292 / S-41), this protein is Small ribosomal subunit protein bS20.